The sequence spans 20 residues: Toxin CpTx-4a (20 aa).

Belongs to the spider toxin CSTX family. As to expression, expressed by the venom gland.

The protein localises to the secreted. In terms of biological role, spider venom toxin that exhibits cytolytic activity by forming an alpha-helix across the membrane. Lethal to insect larvae. The sequence is that of Toxin CpTx-4a from Cheiracanthium punctorium (Yellow sac spider).